A 126-amino-acid chain; its full sequence is Large ribosomal subunit protein bL12 (126 aa).

The protein belongs to the bacterial ribosomal protein bL12 family. As to quaternary structure, homodimer. Part of the ribosomal stalk of the 50S ribosomal subunit. Forms a multimeric L10(L12)X complex, where L10 forms an elongated spine to which 2 to 4 L12 dimers bind in a sequential fashion. Binds GTP-bound translation factors.

Forms part of the ribosomal stalk which helps the ribosome interact with GTP-bound translation factors. Is thus essential for accurate translation. The chain is Large ribosomal subunit protein bL12 from Coxiella burnetii (strain CbuK_Q154) (Coxiella burnetii (strain Q154)).